A 488-amino-acid chain; its full sequence is 3-octaprenyl-4-hydroxybenzoate carboxy-lyase (488 aa).

Position 172 (N172) interacts with Mn(2+). Prenylated FMN contacts are provided by residues 175 to 177 (IYR), 189 to 191 (RWL), and 194 to 195 (RG). Residue E238 coordinates Mn(2+). The active-site Proton donor is the D287.

This sequence belongs to the UbiD family. In terms of assembly, homohexamer. Prenylated FMN serves as cofactor. Requires Mn(2+) as cofactor.

Its subcellular location is the cell membrane. The enzyme catalyses a 4-hydroxy-3-(all-trans-polyprenyl)benzoate + H(+) = a 2-(all-trans-polyprenyl)phenol + CO2. It functions in the pathway cofactor biosynthesis; ubiquinone biosynthesis. Functionally, catalyzes the decarboxylation of 3-octaprenyl-4-hydroxy benzoate to 2-octaprenylphenol, an intermediate step in ubiquinone biosynthesis. This chain is 3-octaprenyl-4-hydroxybenzoate carboxy-lyase, found in Pseudomonas paraeruginosa (strain DSM 24068 / PA7) (Pseudomonas aeruginosa (strain PA7)).